Here is a 384-residue protein sequence, read N- to C-terminus: N-acetylneuraminate epimerase (384 aa).

The N-terminal stretch at 1-24 (MNMKTLLTYATLLSVTAFSHVVYA) is a signal peptide. Kelch repeat units follow at residues 46-90 (KVYV…SVIG), 92-145 (YIYL…YSPD), 147-184 (RQILFFGGYNKAYFDRYLRDISTTDKQVNPEVWQRIVD), 185-230 (DYMG…VIEG), 233-281 (VTLI…VAGA), 303-352 (QAFE…TTSE), and 354-383 (VLIVGGEKSGKEMSHKVYMLAWNGSTVEVI). E239 functions as the Proton acceptor in the catalytic mechanism.

This sequence belongs to the NanM family. Homodimer.

The protein resides in the periplasm. The enzyme catalyses N-acetyl-alpha-neuraminate = N-acetyl-beta-neuraminate. In terms of biological role, converts alpha-N-acetylneuranimic acid (Neu5Ac) to the beta-anomer, accelerating the equilibrium between the alpha- and beta-anomers. Probably facilitates sialidase-negative bacteria to compete successfully for limited amounts of extracellular Neu5Ac, which is likely taken up in the beta-anomer. In addition, the rapid removal of sialic acid from solution might be advantageous to the bacterium to damp down host responses. This is N-acetylneuraminate epimerase from Vibrio cholerae serotype O1 (strain ATCC 39315 / El Tor Inaba N16961).